We begin with the raw amino-acid sequence, 225 residues long: Elongation factor 1-beta (225 aa).

The GST C-terminal domain occupies 2–84; sequence GFGDLKSPAG…ALGKYGPADV (83 aa). Lysine 7 carries the post-translational modification N6-acetyllysine. A phosphoserine mark is found at serine 8 and serine 42. A disordered region spans residues 78–115; the sequence is KYGPADVEDTTGSGATDSKDDDDIDLFGSDDEEESEEA. 2 positions are modified to phosphothreonine: threonine 88 and threonine 93. Phosphoserine occurs at positions 95 and 106. Residues 96-113 show a composition bias toward acidic residues; the sequence is KDDDDIDLFGSDDEEESE. Lysine 147 participates in a covalent cross-link: Glycyl lysine isopeptide (Lys-Gly) (interchain with G-Cter in SUMO2). At serine 174 the chain carries Phosphoserine.

The protein belongs to the EF-1-beta/EF-1-delta family. EF-1 is composed of 4 subunits: alpha, beta (alpha subunit of the eEF1B subcomplex), delta (beta subunit of the eEF1B subcomplex), and gamma (gamma subunit of the eEF1B subcomplex). Interacts with elongation factor EEF1A1. Phosphorylation affects the GDP/GTP exchange rate.

Catalytic subunit of the guanine nucleotide exchange factor (GEF) (eEF1B subcomplex) of the eukaryotic elongation factor 1 complex (eEF1). Stimulates the exchange of GDP for GTP on elongation factor 1A (eEF1A), probably by displacing GDP from the nucleotide binding pocket in eEF1A. The protein is Elongation factor 1-beta (EEF1B2) of Homo sapiens (Human).